Reading from the N-terminus, the 827-residue chain is Xanthomonalisin (827 aa).

The first 23 residues, 1–23 (MKIEKTALTVAIALAMSSLSAHA), serve as a signal peptide directing secretion. A propeptide spans 24–237 (EDAWVSTHTQ…GPNVGTQAAA (214 aa)) (removed in mature form). A Peptidase S53 domain is found at 241-625 (AHHPQDFAAI…GKLNTYAQAN (385 aa)). Active-site charge relay system residues include E312, D316, and S544. 5 residues coordinate Ca(2+): D585, V586, A601, G603, and D605. Positions 635–722 (TNAPPVANFS…VTVSSSGGTG (88 aa)) constitute a PKD domain. A propeptide spans 636 to 827 (NAPPVANFSV…GVSLKATWTN (192 aa)) (removed in mature form).

Ca(2+) serves as cofactor. In terms of processing, autocatalytically processed.

It is found in the secreted. The enzyme catalyses Cleavage of casein.. Its activity is regulated as follows. Inhibited by 1,2-epoxy-3-(p-nitrophenoxy)propane (EPNP), but not by pepstatin, pepstatin Ac (S-PI) and diazoacetyl-DL-norleucine methyl ester (DAN). Not inhibited by metal ions. In terms of biological role, pepstatin-insensitive serine-carboxyl proteinase. Shows activity on acid-denatured hemoglobin and on casein. The sequence is that of Xanthomonalisin from Xanthomonas sp. (strain T-22).